The following is a 156-amino-acid chain: Small ribosomal subunit protein uS7 (156 aa).

This sequence belongs to the universal ribosomal protein uS7 family. In terms of assembly, part of the 30S ribosomal subunit. Contacts proteins S9 and S11.

Its function is as follows. One of the primary rRNA binding proteins, it binds directly to 16S rRNA where it nucleates assembly of the head domain of the 30S subunit. Is located at the subunit interface close to the decoding center, probably blocks exit of the E-site tRNA. The sequence is that of Small ribosomal subunit protein uS7 from Dehalococcoides mccartyi (strain ATCC BAA-2266 / KCTC 15142 / 195) (Dehalococcoides ethenogenes (strain 195)).